A 465-amino-acid chain; its full sequence is Nucleolar and spindle-associated protein 1 (465 aa).

Residues Ala-32–Ala-61 adopt a coiled-coil conformation. Disordered regions lie at residues Lys-44–Ser-123, Val-148–Phe-207, and Gly-252–Lys-294. Positions Glu-56–Glu-75 are enriched in polar residues. The span at Gln-76–Thr-86 shows a compositional bias: basic and acidic residues. Residues Lys-87–His-96 show a composition bias toward basic residues. Ser-152 is subject to Phosphoserine. The segment covering Pro-154–Ser-166 has biased composition (polar residues). Basic and acidic residues predominate over residues His-169–Val-179. Thr-204 carries the phosphothreonine modification. The segment at Gly-262 to Gln-405 is interaction with microtubules. Ser-265 carries the phosphoserine modification. Phosphothreonine is present on Thr-269. Ser-272, Ser-292, Ser-299, and Ser-334 each carry phosphoserine. Positions Ser-308 to Pro-338 are disordered. Phosphothreonine occurs at positions 337, 361, and 372. Residues Ser-375 and Ser-386 each carry the phosphoserine modification. Positions His-396 to Gly-454 are disordered. The KEN box motif lies at Lys-407–His-413. Residues Arg-430–Arg-457 adopt a coiled-coil conformation. The segment covering Gln-432 to Leu-453 has biased composition (basic and acidic residues).

Belongs to the NUSAP family. As to quaternary structure, interacts with DNA and microtubules. Microtubule bundling is inhibited by IPO7, KPNA2 and KPNB1 while association with DNA is also inhibited by IPO7 and KPNA2. Post-translationally, ubiquitinated. Ubiquitination by FZR1 may lead to proteasome-dependent degradation of this protein.

Its subcellular location is the cytoplasm. It localises to the nucleus. The protein localises to the nucleolus. The protein resides in the cytoskeleton. It is found in the spindle. Its subcellular location is the chromosome. Its function is as follows. Microtubule-associated protein with the capacity to bundle and stabilize microtubules. May associate with chromosomes and promote the organization of mitotic spindle microtubules around them. The sequence is that of Nucleolar and spindle-associated protein 1 (NUSAP1) from Bos taurus (Bovine).